The sequence spans 90 residues: Probable acyl carrier protein (90 aa).

The 82-residue stretch at 9 to 90 (QVTVEELSAL…LVNGALKTGV (82 aa)) folds into the Carrier domain. Serine 47 bears the O-(pantetheine 4'-phosphoryl)serine mark.

Post-translationally, 4'-phosphopantetheine is transferred from CoA to a specific serine of the apo-ACP-like protein.

Its function is as follows. Involved in developmentally regulated synthesis of a compound biosynthetically related to polyketide antibiotics which is essential for spore color in Streptomyces coelicolor. The chain is Probable acyl carrier protein from Streptomyces coelicolor (strain ATCC BAA-471 / A3(2) / M145).